The primary structure comprises 343 residues: Heat-inducible transcription repressor HrcA (343 aa).

It belongs to the HrcA family.

Its function is as follows. Negative regulator of class I heat shock genes (grpE-dnaK-dnaJ and groELS operons). Prevents heat-shock induction of these operons. The polypeptide is Heat-inducible transcription repressor HrcA (Bacillus velezensis (strain DSM 23117 / BGSC 10A6 / LMG 26770 / FZB42) (Bacillus amyloliquefaciens subsp. plantarum)).